The primary structure comprises 452 residues: NADH-ubiquinone oxidoreductase chain 4 (452 aa).

14 helical membrane passes run 7–27, 57–77, 95–115, 116–136, 145–165, 186–206, 218–238, 251–271, 278–298, 303–323, 336–356, 360–380, 386–406, and 428–448; these read VLMSLLLLPLIVNLYPWIIAL, MMSFTLSALTIWVTVMMILAS, VILLIILINCFLSPNLIMFYI, WFEASLIPTMVLIMTWGYQPE, MIYTVAASLPMLMVLCKIFIV, MALAWVLTLGGFLVKLPMFTV, PIAGSMILAAILLKLGGYGIL, TSSLLSSVALVGAVSTSLICL, SLIAYSSVGHMGLMVAGALMS, FQAALAMMIAHGLSSSALFVM, LFLMKGLLVLAPTLTMWWFLF, NMAAPPSINLLSEIMLITSIL, AFILLGLTSFFTAAYCLYMYT, and LTLMTMHLVPTILIIFKPELI.

Belongs to the complex I subunit 4 family.

The protein localises to the mitochondrion membrane. It carries out the reaction a ubiquinone + NADH + 5 H(+)(in) = a ubiquinol + NAD(+) + 4 H(+)(out). Its function is as follows. Core subunit of the mitochondrial membrane respiratory chain NADH dehydrogenase (Complex I) that is believed to belong to the minimal assembly required for catalysis. Complex I functions in the transfer of electrons from NADH to the respiratory chain. The immediate electron acceptor for the enzyme is believed to be ubiquinone. The sequence is that of NADH-ubiquinone oxidoreductase chain 4 (ND4) from Lumbricus terrestris (Common earthworm).